The sequence spans 366 residues: Polyprenyl transferase AOL_s00215g276 (366 aa).

Residues 1 to 22 form a disordered region; sequence MESIIARPRTRSSAKEKTQTMS. Transmembrane regions (helical) follow at residues 53–73, 85–105, 137–157, 160–180, 185–205, 212–232, and 253–273; these read LHTL…CLSA, FLSV…AFCT, IIAF…TLGF, ALVC…KRVV, LVLG…VAGN, AVPM…IYAT, and HMHQ…SFTA. The N-linked (GlcNAc...) asparagine glycan is linked to Asn277. The next 2 membrane-spanning stretches (helical) occupy residues 281–301 and 312–332; these read LFWS…LLSL and VFLM…IELW. Asn352 carries an N-linked (GlcNAc...) asparagine glycan.

It belongs to the UbiA prenyltransferase family. Requires Mg(2+) as cofactor.

The protein resides in the membrane. Its pathway is secondary metabolite biosynthesis; terpenoid biosynthesis. In terms of biological role, polyprenyl transferase; part of the gene cluster that mediates the biosynthesis of sesquiterpenyl epoxy-cyclohexenoids (SECs) such as anthrobotrisins and arthrosporols, metabolites that possess a novel hybrid carbon skeleton consisting of a polyketide-derived epoxycyclohexenol combined with a terpenoid-derived monocyclic sesquiterpenol substructure (PKS-PTS hybrid). The SEC pathway plays an important role for fungal soil colonization via decreasing fungal nematode-capturing ability. Within the pathway, the polyprenyl transferase catalyzes the farnesylation of toluquinol to yield farnesyl hydroquinone, the first hybrid precursor for biosynthesis of SECs, and farnesyl quinone (34) might be the key precursor for the epoxy ring formation. The pathway begins with the biosynthesis of 6-methylsalicylic acid (6-MSA), the first precursor of the polyketide-derived epoxycyclohexenol in arthrosporols, by the polyketide synthase (PKS) AOL_s00215g283 via condensation of 1 acetate and 3 malonate units. The 6-methylsalicylic acid decarboxylase AOL_s00215g281 then catalyzes the decarboxylation of 6-methylsalicylic acid to yield m-cresol. The cytochrome P450 monooxygenase AOL_s00215g282 further oxidizes m-cresol to yield toluquinol. With the assistance of the oxidoreductase AOL_s00215g277, the polyprenyl transferase AOL_s00215g276 catalyzes the farnesylation of toluquinol to produce farnesyl hydroquinone, the hybrid precursor for biosynthesis of SECs. Farnesyl hydroquinone undergoes epoxidation and then subsequent dehydrogenation to form farnesyl epoxy-quinone, the first and simplest SEC. The cytochrome P450 monooxygenase AOL_s00215g278 and the FAD-dependent monooxygenase AOL_s00215g279 might be involved in the oxygenation of the phenol moiety, most likely in the epoxy formation. The cytochrome P450 monooxygenases AOL_s00215g274 and AOL_s00215g280 are involved in specific regional ketone reductions at respectively C-4 and C-1 of farnesyl epoxy-quinone PubMed:33823587. This is Polyprenyl transferase AOL_s00215g276 from Arthrobotrys oligospora (strain ATCC 24927 / CBS 115.81 / DSM 1491) (Nematode-trapping fungus).